Consider the following 266-residue polypeptide: Undecaprenyl-diphosphatase (266 aa).

Transmembrane regions (helical) follow at residues 1–21 (MDIFQVIVLALIQGLTEFLPI), 39–59 (QGLTFDVAVNTGSLLAVVIYF), 87–107 (WWIILATIPAVIFGFTAKDFI), 114–134 (IEVIATTTIVFGLLLWWADKL), 144–164 (VGWKKALLIGFAQAMALIPGT), 184–204 (AARFSFLMSVPVSLGAAILVV), 218–238 (ALVLGTALSFVAAYLCIHYFL), and 246–266 (MTPFVIYRLALGAILCVVIFA).

It belongs to the UppP family.

Its subcellular location is the cell inner membrane. The catalysed reaction is di-trans,octa-cis-undecaprenyl diphosphate + H2O = di-trans,octa-cis-undecaprenyl phosphate + phosphate + H(+). Functionally, catalyzes the dephosphorylation of undecaprenyl diphosphate (UPP). Confers resistance to bacitracin. This chain is Undecaprenyl-diphosphatase, found in Shewanella loihica (strain ATCC BAA-1088 / PV-4).